Consider the following 356-residue polypeptide: Cell division protein ZipA (356 aa).

At 1–6 the chain is on the periplasmic side; that stretch reads MEDLQL. A helical transmembrane segment spans residues 7–27; that stretch reads VLFVLGAIAIVAVLVHGFWSI. The Cytoplasmic portion of the chain corresponds to 28–356; the sequence is RRQQPKSLKD…DYLHRIRANA (329 aa). The disordered stretch occupies residues 132 to 155; it reads PAQPDFSLQPPVAKEQHRGPKVSR.

This sequence belongs to the ZipA family. Interacts with FtsZ via their C-terminal domains.

The protein resides in the cell inner membrane. Its function is as follows. Essential cell division protein that stabilizes the FtsZ protofilaments by cross-linking them and that serves as a cytoplasmic membrane anchor for the Z ring. Also required for the recruitment to the septal ring of downstream cell division proteins. In Shewanella baltica (strain OS185), this protein is Cell division protein ZipA.